The sequence spans 646 residues: Elongation factor 4 (646 aa).

The tr-type G domain occupies 42-227 (AQIRNFCIIA…EVVRRVPHPQ (186 aa)). GTP contacts are provided by residues 54 to 59 (DHGKST) and 174 to 177 (NKID).

The protein belongs to the TRAFAC class translation factor GTPase superfamily. Classic translation factor GTPase family. LepA subfamily.

Its subcellular location is the cell membrane. It catalyses the reaction GTP + H2O = GDP + phosphate + H(+). Required for accurate and efficient protein synthesis under certain stress conditions. May act as a fidelity factor of the translation reaction, by catalyzing a one-codon backward translocation of tRNAs on improperly translocated ribosomes. Back-translocation proceeds from a post-translocation (POST) complex to a pre-translocation (PRE) complex, thus giving elongation factor G a second chance to translocate the tRNAs correctly. Binds to ribosomes in a GTP-dependent manner. This chain is Elongation factor 4, found in Mycobacterium leprae (strain Br4923).